Consider the following 229-residue polypeptide: Ion-translocating oxidoreductase complex subunit E (229 aa).

A run of 5 helical transmembrane segments spans residues Leu-58–Phe-78, Ile-82–Ile-102, Leu-105–Val-125, Ala-147–Ile-167, and Gly-201–Val-221.

It belongs to the NqrDE/RnfAE family. As to quaternary structure, the complex is composed of six subunits: RnfA, RnfB, RnfC, RnfD, RnfE and RnfG.

Its subcellular location is the cell inner membrane. In terms of biological role, part of a membrane-bound complex that couples electron transfer with translocation of ions across the membrane. The chain is Ion-translocating oxidoreductase complex subunit E from Glaesserella parasuis serovar 5 (strain SH0165) (Haemophilus parasuis).